Here is a 238-residue protein sequence, read N- to C-terminus: Ribosomal RNA small subunit methyltransferase G (238 aa).

S-adenosyl-L-methionine contacts are provided by residues glycine 77, phenylalanine 82, 128–129, and arginine 147; that span reads AE. A disordered region spans residues 219 to 238; it reads KETPNKYPRKPGTPNKLPIE.

The protein belongs to the methyltransferase superfamily. RNA methyltransferase RsmG family.

Its subcellular location is the cytoplasm. Specifically methylates the N7 position of guanine in position 535 of 16S rRNA. This is Ribosomal RNA small subunit methyltransferase G from Listeria monocytogenes serovar 1/2a (strain ATCC BAA-679 / EGD-e).